Consider the following 600-residue polypeptide: MVRRKLRLLVILAGIWLVGIVVYLFKGDDQSEFEKRVIDKGPDGFYVHKEEKEHQPFQEENKAEVLHQVEDQWKKKQDAEITQSRQTFIETKKLLPPDDELGDIPWGQFDELGYISKTTLKPGQDPYARNKFNLQASDNIKSNRHVPDTRHMNCRSETWSQDLPDTSVIITFHNEARSALLRTIVSIFRKSPDHLIREIILVDDFSDDPSDGQELDKIKKVKVLRNDKRQGLIRSRVNGANMAKGKVLTFLDSHCECNEKWLEPLLDRVKQDRRNVVSPIIDVISMDNFDYIGASADLKGGFDWNLVFKWDYMSAEERNRQRQNPTAPIRTPMIAGGLFSIDKSWFDELGQYDLKMDVWGGENLEISFRVWQCHGNLEIIPCSRVGHVFRKQHPYTFPGGSGQIFARNTKRAAEVWMDEYIQFYFAAVPSAKHVDVGDISERLALRDRLQCKPFKWFLENVYPELKIPSVQDIAFGSIKQGNDCMDTMGHFADGILGLYPCHNSGGNQEFSLTKAGEVKHLDLCVTLVDTRPGNEVKLYQCTPGNYKQQFVQNPAKDQLRHKSYDLCLDSVVWQTKGIVANKCDPSSYTQKWTFSLSKNR.

Residues 1–7 lie on the Cytoplasmic side of the membrane; that stretch reads MVRRKLR. A helical; Signal-anchor for type II membrane protein transmembrane segment spans residues 8-28; the sequence is LLVILAGIWLVGIVVYLFKGD. Topologically, residues 29 to 600 are lumenal; sequence DQSEFEKRVI…KWTFSLSKNR (572 aa). 5 disulfides stabilise this stretch: Cys154-Cys382, Cys373-Cys451, Cys484-Cys501, Cys524-Cys541, and Cys567-Cys583. Positions 163–268 are catalytic subdomain A; the sequence is LPDTSVIITF…EKWLEPLLDR (106 aa). Thr171, Asp204, and Arg229 together coordinate substrate. Residue Asp252 coordinates Mn(2+). Substrate is bound at residue Ser253. His254 serves as a coordination point for Mn(2+). The catalytic subdomain B stretch occupies residues 328-390; sequence PIRTPMIAGG…PCSRVGHVFR (63 aa). Trp359 provides a ligand contact to substrate. His387 serves as a coordination point for Mn(2+). Residues Arg390, His393, and Tyr395 each contribute to the substrate site. The Ricin B-type lectin domain maps to 466–595; it reads KIPSVQDIAF…SSYTQKWTFS (130 aa).

The protein belongs to the glycosyltransferase 2 family. GalNAc-T subfamily. It depends on Mn(2+) as a cofactor. In terms of processing, O-glycosylated.

The protein resides in the golgi apparatus membrane. It carries out the reaction L-seryl-[protein] + UDP-N-acetyl-alpha-D-galactosamine = a 3-O-[N-acetyl-alpha-D-galactosaminyl]-L-seryl-[protein] + UDP + H(+). The enzyme catalyses L-threonyl-[protein] + UDP-N-acetyl-alpha-D-galactosamine = a 3-O-[N-acetyl-alpha-D-galactosaminyl]-L-threonyl-[protein] + UDP + H(+). Its pathway is protein modification; protein glycosylation. No change in activity by addition of up to 10% methanol or glycerol, or 5% acetonitrile. 40% reduction in activity by 10% acetonitrile or by lyophilization. Activity requires divalent cations, the best being Mn(2+) (10-20 mM), followed by Co(2+), Mg(2+) and Ca(2+). Loss of activity with Cu(2+) or in the presence of EDTA. Inhibited by UDP, but not by UMP, UTP, ADP or GDP nucleotides. No inhibition by galactose, N-acetylglucosamine or N-acetylgalactosamine sugars. Functionally, catalyzes the initial reaction in O-linked oligosaccharide biosynthesis, the transfer of an N-acetyl-D-galactosamine residue to a serine or threonine residue on the protein receptor. Has a broad substrate specificity. Acceptor peptides include Muc2, Muc5Ac, Muc1a and Muc1a', with Muc2 as the best acceptor. Acts on non-glycosylated and mono- or multi-glycosylated peptide substrates. Transfers preferably to threonine rather than serine residue. Thr-15 is the most preferred site of glycosylation in Muc2 peptide PTTTPITTTTTVTPTPTPTGTQTK having proline residues at position -1, and at positions +1 and +3, where the number represents the distance from the C-terminal and N-terminal hydroxyl amino acid, respectively. Transfer of the N-acetyl-D-galactosamine (GalNAc) is optimal with proline residues at positions -3, -1, +1 and +3, but other amino acids are tolerated, although some, such as phenylalanine, isoleucine or leucine at -1, or lysine at +3 prevent the transfer completely. Second GalNAc is transferred to Muc2 Thr-2 or Thr-13, both of which have two proline residues nearby. Up to nine sites can be glycosylated within Muc2, but eight are used simultaneously since Thr-19 and Thr-21 are not detected to be glycosylated at the same time. Glycosylation is not detected of a potential site, which is next to an already glycosylated site, but only one amino acid is needed in between two glycosylation sites. Ser-5 is the preferred glycosylation site in Muc5Ac peptide GTTPSPVPTTSTTSAP into which up to four GalNAcs can be attached. Only the threonine residues are detected as pontential glycosylation sites in Muc1a APPAHGVTSAPDTRPAPGC and Muc1a' AHGVTSAPDTR peptides. Transferase activity is restricted to UDP-GalNAc as a donor, and none of the nucleotide sugars UDP-Gal, UDP-GlcNAc, GDP-fucose, UDP-xylose, UDP-glucuronic acid or CMP-neuraminic acid are utilized as donors. This is Polypeptide N-acetylgalactosaminyltransferase from Biomphalaria glabrata (Bloodfluke planorb).